Reading from the N-terminus, the 241-residue chain is MHSPVEQFAIKPLVSIQVAGVDVSFTNSSLLMLLTVGLAAAFFWNATARRTLIPGRLQSAAEMLYEFVANMIRDNVGKEGMKYFPYILTLFVFVFLGNMLGMLPYSFTFTSHIAVTAALAVGIFIAVTIIGFARHGFHYFRMFFPHGAPLLTAPLLIPIELISYLSRPFSLSVRLFANMTVGHIMLKVLAGFVIMLGVVGGVVPFAVVLGVTVLEFFIAALQAYVFTILTCIYLNDAINMH.

5 helical membrane passes run 23–43 (VSFT…AAFF), 83–103 (YFPY…LGML), 113–133 (IAVT…IGFA), 188–208 (VLAG…FAVV), and 209–229 (LGVT…FTIL).

This sequence belongs to the ATPase A chain family. As to quaternary structure, F-type ATPases have 2 components, CF(1) - the catalytic core - and CF(0) - the membrane proton channel. CF(1) has five subunits: alpha(3), beta(3), gamma(1), delta(1), epsilon(1). CF(0) has four main subunits: a, b, b' and c.

The protein resides in the cell inner membrane. Its function is as follows. Key component of the proton channel; it plays a direct role in the translocation of protons across the membrane. The chain is ATP synthase subunit a from Rhodospirillum rubrum (strain ATCC 11170 / ATH 1.1.1 / DSM 467 / LMG 4362 / NCIMB 8255 / S1).